We begin with the raw amino-acid sequence, 371 residues long: Aminomethyltransferase (371 aa).

Belongs to the GcvT family. The glycine cleavage system is composed of four proteins: P, T, L and H.

The catalysed reaction is N(6)-[(R)-S(8)-aminomethyldihydrolipoyl]-L-lysyl-[protein] + (6S)-5,6,7,8-tetrahydrofolate = N(6)-[(R)-dihydrolipoyl]-L-lysyl-[protein] + (6R)-5,10-methylene-5,6,7,8-tetrahydrofolate + NH4(+). In terms of biological role, the glycine cleavage system catalyzes the degradation of glycine. The chain is Aminomethyltransferase from Cutibacterium acnes (strain DSM 16379 / KPA171202) (Propionibacterium acnes).